Here is a 207-residue protein sequence, read N- to C-terminus: Coiled-coil domain-containing protein 124 homolog (207 aa).

The disordered stretch occupies residues 1–90; it reads MGNPKKRAEK…KAAKKNSSLD (90 aa). Residues 5–71 are a coiled coil; sequence KKRAEKAEAA…RLEKEEMESL (67 aa). Composition is skewed to basic and acidic residues over residues 9–28 and 41–65; these read EKAE…KKDA and NKKE…RLEK.

Belongs to the CCDC124 family. In terms of assembly, associates with translationally inactive ribosomes in the nonrotated state.

The protein localises to the cytoplasm. Its subcellular location is the nucleus. In terms of biological role, ribosome-binding protein involved in ribosome hibernation by associating with translationally inactive ribosomes. Required for translational recovery after starvation from stationary phase. May facilitate rapid translation reactivation by stabilizing the recycling-competent state of inactive ribosomes. The sequence is that of Coiled-coil domain-containing protein 124 homolog from Schizosaccharomyces pombe (strain 972 / ATCC 24843) (Fission yeast).